Consider the following 108-residue polypeptide: uncharacterized protein (108 aa).

Positions 48–73 (NSNIPSSSSSSPSFASFFSSTSTSAT) are enriched in low complexity. The interval 48–81 (NSNIPSSSSSSPSFASFFSSTSTSATLNGSSNNK) is disordered.

This is an uncharacterized protein from Dictyostelium discoideum (Social amoeba).